A 188-amino-acid chain; its full sequence is PRA1 family protein 3 (188 aa).

The residue at position 1 (Met-1) is an N-acetylmethionine. Residues 1 to 35 lie on the Cytoplasmic side of the membrane; it reads MDVNIAPLRAWDDFFPGSDRFAQPDFRDISKWNNR. A run of 2 helical transmembrane segments spans residues 36–56 and 57–77; these read VVSN…MMIS and VVGF…VLVF. Over 78–93 the chain is Cytoplasmic; sequence TGFVWAAHNKDALRRL. 2 helical membrane-spanning segments follow: residues 94-114 and 115-135; these read KKRY…FLIS and MFGG…LMFI. A required for homodimer formation and heterodimer formation with ARL6IP1 region spans residues 103-117; it reads MVVMLASYFLISMFG. Topologically, residues 136-188 are cytoplasmic; sequence HASLRLRNLKNKLENKMEGIGLKRTPMGIVLDALEQQEEGINRLTDYISKVKE. The segment at 136–188 is targeting to endoplasmic reticulum membrane; the sequence is HASLRLRNLKNKLENKMEGIGLKRTPMGIVLDALEQQEEGINRLTDYISKVKE.

The protein belongs to the PRA1 family. Homodimer. Heterodimer with ARL6IP1. Forms multimers. Interacts with ARL6. Interacts with prenylated RAB1A and RAB3A. Interacts with SLC1A1/EAAC1. Interacts with RTN2 (via first transmembrane domain). Does not interact with VAMP1, VAMP2 or VAMP3.

The protein localises to the endoplasmic reticulum membrane. The protein resides in the cell membrane. Its subcellular location is the cytoplasm. It localises to the cytoskeleton. In terms of biological role, regulates intracellular concentrations of taurine and glutamate. Negatively modulates SLC1A1/EAAC1 glutamate transport activity by decreasing its affinity for glutamate in a PKC activity-dependent manner. Plays a role in the retention of SLC1A1/EAAC1 in the endoplasmic reticulum. The chain is PRA1 family protein 3 (ARL6IP5) from Macaca fascicularis (Crab-eating macaque).